A 342-amino-acid chain; its full sequence is Succinylglutamate desuccinylase (342 aa).

Residues His63, Glu66, and His155 each contribute to the Zn(2+) site. The active site involves Glu219.

It belongs to the AspA/AstE family. Succinylglutamate desuccinylase subfamily. Zn(2+) serves as cofactor.

It carries out the reaction N-succinyl-L-glutamate + H2O = L-glutamate + succinate. It participates in amino-acid degradation; L-arginine degradation via AST pathway; L-glutamate and succinate from L-arginine: step 5/5. Transforms N(2)-succinylglutamate into succinate and glutamate. This is Succinylglutamate desuccinylase from Vibrio vulnificus (strain CMCP6).